A 510-amino-acid chain; its full sequence is Ribonuclease Y (510 aa).

The helical transmembrane segment at 4–24 (LLWAVVALLAGLAGGAGIGVY) threads the bilayer. The KH domain maps to 200-260 (TVSTVNLPSE…VRREVARVAL (61 aa)). The 94-residue stretch at 326-419 (VLQHSLECAL…VIAADAISGA (94 aa)) folds into the HD domain.

Belongs to the RNase Y family.

It localises to the cell membrane. Its function is as follows. Endoribonuclease that initiates mRNA decay. In Chloroflexus aurantiacus (strain ATCC 29366 / DSM 635 / J-10-fl), this protein is Ribonuclease Y.